A 764-amino-acid polypeptide reads, in one-letter code: Thyrotropin receptor (764 aa).

The N-terminal stretch at 1 to 20 is a signal peptide; that stretch reads MRPADLLQLVLLLDLPRDLG. Topologically, residues 21-413 are extracellular; it reads GMGCSSPPCE…EFNPCEDIMG (393 aa). An intrachain disulfide couples Cys-31 to Cys-41. N-linked (GlcNAc...) asparagine glycosylation is found at Asn-77, Asn-99, and Asn-113. LRR repeat units follow at residues 100–124, 125–150, 152–174, 176–199, 200–223, 227–248, and 250–271; these read LSKV…ALKE, LPLL…VYST, IFFI…AFQG, CNET…AFNG, TKLD…AFGG, GPSL…GLEH, and KELI…SFLH. 2 N-linked (GlcNAc...) asparagine glycosylation sites follow: Asn-177 and Asn-198. N-linked (GlcNAc...) asparagine glycosylation is present at Asn-302. A Sulfotyrosine modification is found at Tyr-385. A helical membrane pass occupies residues 414–441; the sequence is YKFLRIVVWFVSLLALLGNVFVLLILLT. Topologically, residues 442–450 are cytoplasmic; sequence SHYKLNVPR. A helical membrane pass occupies residues 451–473; it reads FLMCNLAFADFCMGMYLLLIASV. The Extracellular segment spans residues 474-494; the sequence is DLYTHSEYYNHAIDWQTGPGC. A disulfide bond links Cys-494 and Cys-569. The chain crosses the membrane as a helical span at residues 495–517; it reads NTAGFFTVFASELSVYTLTVITL. Topologically, residues 518-537 are cytoplasmic; that stretch reads ERWYAITFAMRLDRKIRLRH. The chain crosses the membrane as a helical span at residues 538–560; sequence ACAIMVGGWVCCFLLALLPLVGI. Residues 561 to 580 are Extracellular-facing; that stretch reads SSYAKVSICLPMDTETPLAL. Residues 581 to 602 form a helical membrane-spanning segment; the sequence is AYIVFVLTLNIVAFVIVCCCYV. Residues 603 to 625 are Cytoplasmic-facing; it reads KIYITVRNPQYNPGDKDTKIAKR. Residues 626–649 traverse the membrane as a helical segment; the sequence is MAVLIFTDFICMAPISFYALSAIL. Over 650 to 660 the chain is Extracellular; sequence NKPLITVSNSK. Residues 661-682 traverse the membrane as a helical segment; the sequence is ILLVLFYPLNSCANPFLYAIFT. Residues 683–764 are Cytoplasmic-facing; the sequence is KAFQRDVFIL…ISEEYMQTVL (82 aa). Positions 762–764 match the PDZ-binding motif; it reads TVL.

Belongs to the G-protein coupled receptor 1 family. FSH/LSH/TSH subfamily. In terms of assembly, interacts with heterodimer GPHA2:GPHB5; this interaction stimulates cAMP production. Interacts (via the PDZ-binding motif) with SCRIB; regulates TSHR trafficking and function. In terms of processing, glycosylated. Post-translationally, sulfated. Sulfation on Tyr-385 plays a role in thyrotropin receptor binding and activation. As to expression, expressed in thyroide cells (at protein level). Expressed in the thyroid.

It is found in the cell membrane. It localises to the basolateral cell membrane. Functionally, receptor for the thyroid-stimulating hormone (TSH) or thyrotropin. Also acts as a receptor for the heterodimeric glycoprotein hormone (GPHA2:GPHB5) or thyrostimulin. The activity of this receptor is mediated by G proteins which activate adenylate cyclase. Plays a central role in controlling thyroid cell metabolism. This Homo sapiens (Human) protein is Thyrotropin receptor (TSHR).